Here is a 214-residue protein sequence, read N- to C-terminus: GTP-binding protein ypt3 (214 aa).

Residue 17–24 (GDSGVGKS) participates in GTP binding. An Effector region motif is present at residues 39–47 (SKSTIGVEF). T42 carries the phosphothreonine modification. GTP contacts are provided by residues 65–69 (DTAGQ) and 123–126 (NKTD). S-geranylgeranyl cysteine attachment occurs at residues C213 and C214.

Belongs to the small GTPase superfamily. Rab family.

The protein localises to the cell membrane. It localises to the endosome membrane. It is found in the golgi apparatus membrane. Its subcellular location is the cytoplasm. The protein resides in the nucleus. Its function is as follows. Has a role in retrograde traffricking of proteins from the endosome to the Golgi. Involved in the secretory pathway where it has a role in acid phosphatase secretion. The chain is GTP-binding protein ypt3 (ypt3) from Schizosaccharomyces pombe (strain 972 / ATCC 24843) (Fission yeast).